The sequence spans 332 residues: Methionine synthase (332 aa).

The Zn(2+) site is built by H211, C213, and C296.

It belongs to the archaeal MetE family. Zn(2+) is required as a cofactor.

It functions in the pathway amino-acid biosynthesis; L-methionine biosynthesis via de novo pathway. Functionally, catalyzes the transfer of a methyl group to L-homocysteine resulting in methionine formation. The physiological methyl donor is unknown. The chain is Methionine synthase from Saccharolobus islandicus (strain Y.N.15.51 / Yellowstone #2) (Sulfolobus islandicus).